Here is a 224-residue protein sequence, read N- to C-terminus: Cytidylate kinase (224 aa).

Gly11 to Thr19 is an ATP binding site.

The protein belongs to the cytidylate kinase family. Type 1 subfamily.

The protein localises to the cytoplasm. It carries out the reaction CMP + ATP = CDP + ADP. It catalyses the reaction dCMP + ATP = dCDP + ADP. The chain is Cytidylate kinase from Listeria monocytogenes serovar 1/2a (strain ATCC BAA-679 / EGD-e).